The sequence spans 302 residues: uncharacterized protein (302 aa).

7 consecutive transmembrane segments (helical) span residues 25–45, 58–78, 104–124, 158–178, 182–202, 215–235, and 247–267; these read SFIFSVYIIIGLIISYLLQIF, FSYLILGYIGVLNAFSNVIAL, IQVGSQVLIMGCVLMAFWMFL, YGLLGVFTWGLFIICLSATVL, FAWAAFLGFSASFCAVVQYVP, ALSIPMMMMQTPGGFLIGYLL, and MMYIVSACLQGLLLMLCMFYL. Residues 175 to 245 form the PQ-loop domain; the sequence is ATVLSSNFAW…SRLPGTNWTT (71 aa).

Its subcellular location is the membrane. This is an uncharacterized protein from Schizosaccharomyces pombe (strain 972 / ATCC 24843) (Fission yeast).